Reading from the N-terminus, the 456-residue chain is Enolase (456 aa).

Glutamine 169 lines the (2R)-2-phosphoglycerate pocket. Catalysis depends on glutamate 211, which acts as the Proton donor. Aspartate 252, glutamate 314, and aspartate 341 together coordinate Mg(2+). (2R)-2-phosphoglycerate is bound by residues lysine 366, arginine 395, serine 396, and lysine 417. Lysine 366 serves as the catalytic Proton acceptor.

The protein belongs to the enolase family. The cofactor is Mg(2+).

The protein resides in the cytoplasm. It is found in the secreted. It localises to the cell surface. The enzyme catalyses (2R)-2-phosphoglycerate = phosphoenolpyruvate + H2O. It participates in carbohydrate degradation; glycolysis; pyruvate from D-glyceraldehyde 3-phosphate: step 4/5. In terms of biological role, catalyzes the reversible conversion of 2-phosphoglycerate (2-PG) into phosphoenolpyruvate (PEP). It is essential for the degradation of carbohydrates via glycolysis. The sequence is that of Enolase from Metamycoplasma arthritidis (strain 158L3-1) (Mycoplasma arthritidis).